The chain runs to 521 residues: NAD(P)H-quinone oxidoreductase subunit 2 (521 aa).

Helical transmembrane passes span isoleucine 16 to glycine 36, tryptophan 43 to tryptophan 63, leucine 80 to isoleucine 100, leucine 110 to alanine 130, leucine 133 to tyrosine 153, leucine 168 to leucine 188, leucine 211 to valine 231, proline 245 to isoleucine 265, tryptophan 279 to leucine 299, methionine 307 to threonine 327, valine 335 to phenylalanine 355, leucine 379 to glycine 399, isoleucine 401 to valine 421, and valine 467 to phenylalanine 487.

The protein belongs to the complex I subunit 2 family. NDH-1 can be composed of about 15 different subunits; different subcomplexes with different compositions have been identified which probably have different functions.

The protein localises to the cellular thylakoid membrane. It catalyses the reaction a plastoquinone + NADH + (n+1) H(+)(in) = a plastoquinol + NAD(+) + n H(+)(out). It carries out the reaction a plastoquinone + NADPH + (n+1) H(+)(in) = a plastoquinol + NADP(+) + n H(+)(out). Its function is as follows. NDH-1 shuttles electrons from an unknown electron donor, via FMN and iron-sulfur (Fe-S) centers, to quinones in the respiratory and/or the photosynthetic chain. The immediate electron acceptor for the enzyme in this species is believed to be plastoquinone. Couples the redox reaction to proton translocation, and thus conserves the redox energy in a proton gradient. Cyanobacterial NDH-1 also plays a role in inorganic carbon-concentration. This Crocosphaera subtropica (strain ATCC 51142 / BH68) (Cyanothece sp. (strain ATCC 51142)) protein is NAD(P)H-quinone oxidoreductase subunit 2.